Reading from the N-terminus, the 207-residue chain is LexA repressor (207 aa).

A DNA-binding region (H-T-H motif) is located at residues 29–49 (VREICSAVDLSSTSTVHGHLA). Residues serine 128 and lysine 166 each act as for autocatalytic cleavage activity in the active site.

It belongs to the peptidase S24 family. Homodimer.

The enzyme catalyses Hydrolysis of Ala-|-Gly bond in repressor LexA.. Its function is as follows. Represses a number of genes involved in the response to DNA damage (SOS response), including recA and lexA. In the presence of single-stranded DNA, RecA interacts with LexA causing an autocatalytic cleavage which disrupts the DNA-binding part of LexA, leading to derepression of the SOS regulon and eventually DNA repair. This chain is LexA repressor, found in Lactobacillus johnsonii (strain CNCM I-12250 / La1 / NCC 533).